The following is a 105-amino-acid chain: NADH-quinone oxidoreductase subunit K (105 aa).

The next 3 membrane-spanning stretches (helical) occupy residues 9–29 (PNYY…GVLV), 34–54 (IVLF…LVTF), and 65–85 (IIAF…LAII).

It belongs to the complex I subunit 4L family. As to quaternary structure, NDH-1 is composed of 14 different subunits. Subunits NuoA, H, J, K, L, M, N constitute the membrane sector of the complex.

The protein resides in the cell membrane. It carries out the reaction a quinone + NADH + 5 H(+)(in) = a quinol + NAD(+) + 4 H(+)(out). In terms of biological role, NDH-1 shuttles electrons from NADH, via FMN and iron-sulfur (Fe-S) centers, to quinones in the respiratory chain. The immediate electron acceptor for the enzyme in this species is believed to be a menaquinone. Couples the redox reaction to proton translocation (for every two electrons transferred, four hydrogen ions are translocated across the cytoplasmic membrane), and thus conserves the redox energy in a proton gradient. This chain is NADH-quinone oxidoreductase subunit K, found in Salinispora arenicola (strain CNS-205).